The primary structure comprises 122 residues: Small ribosomal subunit protein uS13 (122 aa).

Residues 95-122 form a disordered region; the sequence is GLPVRGQRTHTNARTRKGPAKSIAGKKK.

Belongs to the universal ribosomal protein uS13 family. In terms of assembly, part of the 30S ribosomal subunit. Forms a loose heterodimer with protein S19. Forms two bridges to the 50S subunit in the 70S ribosome.

Functionally, located at the top of the head of the 30S subunit, it contacts several helices of the 16S rRNA. In the 70S ribosome it contacts the 23S rRNA (bridge B1a) and protein L5 of the 50S subunit (bridge B1b), connecting the 2 subunits; these bridges are implicated in subunit movement. Contacts the tRNAs in the A and P-sites. The chain is Small ribosomal subunit protein uS13 from Nitrobacter winogradskyi (strain ATCC 25391 / DSM 10237 / CIP 104748 / NCIMB 11846 / Nb-255).